A 405-amino-acid polypeptide reads, in one-letter code: MARALLIVLDSVGIGGAPDADRYGDAGSDTVGHIAEACAAGRGDRPGLRAGPLRMPNLTALGLGLACEGATGRVPPGLAPDGPVRALWGHAVETAAGKDTPSGHWEIAGVPVREAWGHFPDTQPAFPAELTAALIERAGLPGILGDCHASGTAIIEALGAEHVRTGKPICYTSADSVFQIAAHEEAFGLERLYETCRIAREVCDPYRVGRVIARPFLGSAAEGFRRTSHRKDFSVAPPAGTLLDGLEAAGRAVVSVGKIGDIFAHRATGREIKPAGNAACLDAALDAFAGLPEGGFVFLNLVDFDTEHGHRRDVPGYAAELEAFDARLPEIQAVLKPGDLCVITADHGNDPTWTGTEHTREQVPVLAFGPGLTPRALGRRESFADMGASVAAHLGLPPLGAGQAW.

Mn(2+) is bound by residues D10, D305, H310, D346, H347, and H358.

It belongs to the phosphopentomutase family. The cofactor is Mn(2+).

Its subcellular location is the cytoplasm. It catalyses the reaction 2-deoxy-alpha-D-ribose 1-phosphate = 2-deoxy-D-ribose 5-phosphate. The catalysed reaction is alpha-D-ribose 1-phosphate = D-ribose 5-phosphate. Its pathway is carbohydrate degradation; 2-deoxy-D-ribose 1-phosphate degradation; D-glyceraldehyde 3-phosphate and acetaldehyde from 2-deoxy-alpha-D-ribose 1-phosphate: step 1/2. Its function is as follows. Isomerase that catalyzes the conversion of deoxy-ribose 1-phosphate (dRib-1-P) and ribose 1-phosphate (Rib-1-P) to deoxy-ribose 5-phosphate (dRib-5-P) and ribose 5-phosphate (Rib-5-P), respectively. The protein is Phosphopentomutase of Methylorubrum extorquens (strain CM4 / NCIMB 13688) (Methylobacterium extorquens).